A 273-amino-acid polypeptide reads, in one-letter code: Putative phosphoenolpyruvate synthase regulatory protein (273 aa).

Residue 153-160 (AVSRAGKT) coordinates ADP.

It belongs to the pyruvate, phosphate/water dikinase regulatory protein family. PSRP subfamily.

The enzyme catalyses [pyruvate, water dikinase] + ADP = [pyruvate, water dikinase]-phosphate + AMP + H(+). It carries out the reaction [pyruvate, water dikinase]-phosphate + phosphate + H(+) = [pyruvate, water dikinase] + diphosphate. Its function is as follows. Bifunctional serine/threonine kinase and phosphorylase involved in the regulation of the phosphoenolpyruvate synthase (PEPS) by catalyzing its phosphorylation/dephosphorylation. The sequence is that of Putative phosphoenolpyruvate synthase regulatory protein from Stenotrophomonas maltophilia (strain R551-3).